A 340-amino-acid chain; its full sequence is Zinc finger protein 367 (340 aa).

The segment at 96–140 (LPTLRGAPPSSASVAAVSGGEDEEEASSPDSGHLKDGIRRGRPRA) is disordered. The segment covering 101-114 (GAPPSSASVAAVSG) has biased composition (low complexity). Residues 127–140 (GHLKDGIRRGRPRA) show a composition bias toward basic and acidic residues. 2 consecutive C2H2-type zinc fingers follow at residues 157–179 (IRCNICNRVFPREKSLQAHKRTH) and 185–209 (YLCDYPDCGKAFVQSGQLKTHQRLH). Residues 280–317 (KGKLVQKADQEQQDPLEYLQSDEEDDEKSGAQRRLQEQ) are disordered. The stretch at 299–332 (QSDEEDDEKSGAQRRLQEQRERLHGALALIELAN) forms a coiled coil. Ser-300 carries the phosphoserine modification. Basic and acidic residues predominate over residues 307–317 (KSGAQRRLQEQ).

The protein belongs to the krueppel C2H2-type zinc-finger protein family.

Its subcellular location is the nucleus. In terms of biological role, transcriptional activator. May be involved in transcriptional activation of erythroid genes. In Rattus norvegicus (Rat), this protein is Zinc finger protein 367 (Znf367).